The following is a 480-amino-acid chain: Aromatic-L-amino-acid decarboxylase (480 aa).

Methionine 1 bears the N-acetylmethionine mark. 2 consecutive repeat copies span residues 58–115 and 118–178. Residues 58–178 are 2 X approximate tandem repeats; the sequence is KDIEKIIMPG…AASPEFTQAA (121 aa). Residue threonine 82 participates in substrate binding. Pyridoxal 5'-phosphate contacts are provided by alanine 148 and serine 149. Residue histidine 192 participates in substrate binding. Threonine 246 and asparagine 300 together coordinate pyridoxal 5'-phosphate. Lysine 303 carries the post-translational modification N6-(pyridoxal phosphate)lysine.

It belongs to the group II decarboxylase family. As to quaternary structure, homodimer. It depends on pyridoxal 5'-phosphate as a cofactor.

The catalysed reaction is L-dopa + H(+) = dopamine + CO2. It catalyses the reaction 5-hydroxy-L-tryptophan + H(+) = serotonin + CO2. It functions in the pathway catecholamine biosynthesis; dopamine biosynthesis; dopamine from L-tyrosine: step 2/2. Functionally, catalyzes the decarboxylation of L-3,4-dihydroxyphenylalanine (DOPA) to dopamine and L-5-hydroxytryptophan to serotonin. The polypeptide is Aromatic-L-amino-acid decarboxylase (Ddc) (Mus musculus (Mouse)).